The chain runs to 160 residues: Small ribosomal subunit protein uS10m (160 aa).

This sequence belongs to the universal ribosomal protein uS10 family. As to quaternary structure, component of the mitochondrial ribosome small subunit (28S) which comprises a 12S rRNA and about 30 distinct proteins.

Its subcellular location is the mitochondrion. In Mus musculus (Mouse), this protein is Small ribosomal subunit protein uS10m (Mrps10).